A 204-amino-acid polypeptide reads, in one-letter code: MAEDADMRNELSDMQQRADQLADESLESTRRMLQLVEESKDAGIRTLVMLDEQGEQLERIEEGMDQINKDMKDAEKNLNDLGKFCGLCSCPCNKMKSGGSKAWGNNQDGVVASQPARVVDEREQMAISGGFIRRVTDDARENEMDENLEQVGGIIGNLRHMALDMGNEIDTQNRQIDRIMEKADSNKTRIDEANQRATKMLGSG.

Residues Met1–Leu11 show a composition bias toward basic and acidic residues. Residues Met1 to Ser25 are disordered. T-SNARE coiled-coil homology domains are found at residues Asp19–Leu81 and Asp138–Met200.

This sequence belongs to the SNAP-25 family.

The protein localises to the synapse. The protein resides in the synaptosome. It is found in the cell membrane. May play an important role in the synaptic function of specific neuronal systems. Associates with proteins involved in vesicle docking and membrane fusion. This Carassius auratus (Goldfish) protein is Synaptosomal-associated protein 25-A (snap25a).